The chain runs to 117 residues: Putative hydrolase fragment YghX (117 aa).

A disordered region spans residues 91 to 117 (DGLSSVGGYPGNDDKGRELQQQVDPTN).

The protein is Putative hydrolase fragment YghX (yghX) of Escherichia coli (strain K12).